Here is a 203-residue protein sequence, read N- to C-terminus: Ribosome maturation factor RimP (203 aa).

Positions 179 to 203 (VSSEGEDGGEARQAPKLNPKKPGKK) are disordered.

The protein belongs to the RimP family.

The protein localises to the cytoplasm. Its function is as follows. Required for maturation of 30S ribosomal subunits. This chain is Ribosome maturation factor RimP, found in Gluconobacter oxydans (strain 621H) (Gluconobacter suboxydans).